An 833-amino-acid polypeptide reads, in one-letter code: Patatin-like phospholipase domain-containing protein SNOG_00918 (833 aa).

Disordered stretches follow at residues methionine 1–aspartate 20 and histidine 49–asparagine 71. A helical membrane pass occupies residues tryptophan 108 to threonine 128. One can recognise a PNPLA domain in the interval leucine 301–asparagine 457. Positions glycine 332–glycine 336 match the GXSXG motif. Catalysis depends on serine 334, which acts as the Nucleophile. Aspartate 444 acts as the Proton acceptor in catalysis. Disordered regions lie at residues threonine 630–proline 657 and leucine 680–leucine 833. Residues serine 644–serine 655 show a composition bias toward low complexity. The span at aspartate 689–lysine 707 shows a compositional bias: polar residues. 3 stretches are compositionally biased toward basic and acidic residues: residues arginine 740–alanine 750, arginine 759–arginine 769, and aspartate 782–valine 794. Acidic residues predominate over residues glutamate 809–glutamate 819.

The protein belongs to the PLPL family.

It is found in the membrane. Probable lipid hydrolase. This chain is Patatin-like phospholipase domain-containing protein SNOG_00918, found in Phaeosphaeria nodorum (strain SN15 / ATCC MYA-4574 / FGSC 10173) (Glume blotch fungus).